We begin with the raw amino-acid sequence, 2036 residues long: Ral GTPase-activating protein subunit alpha-1 (2036 aa).

Disordered stretches follow at residues 343 to 384 (LVSR…SSLC) and 476 to 497 (EEGEKREEENGTNTADHVRNSS). The span at 345-365 (SREESKNDNADKTDRTTEPEQ) shows a compositional bias: basic and acidic residues. 2 stretches are compositionally biased toward polar residues: residues 366-384 (SHSNTSTLTEREPSSSSLC) and 486-497 (GTNTADHVRNSS). 2 positions are modified to phosphoserine: Ser711 and Ser721. Residues 715 to 753 (SFSRGWSRDQPGQAPMRQRSATTTGSPGTEKARSIVRQK) are disordered. The residue at position 754 (Thr754) is a Phosphothreonine. The residue at position 773 (Ser773) is a Phosphoserine. Phosphothreonine is present on Thr778. Phosphoserine is present on residues Ser797, Ser860, Ser861, and Ser864. Disordered stretches follow at residues 849-910 (SGNA…SDSH) and 982-1009 (TITGSESASPVHSPLGSRSQTPSPSTLN). Over residues 850 to 863 (GNASTMTRRGSSPG) the composition is skewed to polar residues. Residues 895–910 (SPASAGSSDLISSDSH) are compositionally biased toward low complexity. A compositionally biased stretch (polar residues) spans 983–1009 (ITGSESASPVHSPLGSRSQTPSPSTLN). 4 positions are modified to phosphoserine: Ser986, Ser990, Ser994, and Ser1000. Position 1002 is a phosphothreonine (Thr1002). Phosphoserine is present on residues Ser1004 and Ser1478. Positions 1327 to 2035 (FTNKTVAHVA…PYHHLPSDAD (709 aa)) are minimal domain that binds to TCF3/E12. The stretch at 1716 to 1744 (KQENDVINAILKQHTEEKEFVEKHFNDLN) forms a coiled coil. A Rap-GAP domain is found at 1796 to 2004 (LRNLDSRQCR…EERARYLQTI (209 aa)).

In terms of assembly, component of the heterodimeric RalGAP1 complex with RALGAPB. Heterodimerization is required for activity. Interacts with the HLH region of TCF3/isoform E12. Widely expressed.

The protein resides in the cytoplasm. It is found in the nucleus. Its function is as follows. Catalytic subunit of the heterodimeric RalGAP1 complex which acts as a GTPase activator for the Ras-like small GTPases RALA and RALB. The polypeptide is Ral GTPase-activating protein subunit alpha-1 (RALGAPA1) (Homo sapiens (Human)).